The sequence spans 215 residues: N-(5'-phosphoribosyl)anthranilate isomerase (215 aa).

This sequence belongs to the TrpF family.

The catalysed reaction is N-(5-phospho-beta-D-ribosyl)anthranilate = 1-(2-carboxyphenylamino)-1-deoxy-D-ribulose 5-phosphate. It participates in amino-acid biosynthesis; L-tryptophan biosynthesis; L-tryptophan from chorismate: step 3/5. The chain is N-(5'-phosphoribosyl)anthranilate isomerase from Ruegeria sp. (strain TM1040) (Silicibacter sp.).